Consider the following 430-residue polypeptide: MEGEPSQPPNSSWPLSQNGTNTEATPATNLTFSSYYQHTSPVAAMFIVAYALIFLLCMVGNTLVCFIVLKNRHMHTVTNMFILNLAVSDLLVGIFCMPTTLVDNLITGWPFDNATCKMSGLVQGMSVSASVFTLVAIAVERFRCIVHPFREKLTLRKALVTIAVIWALALLIMCPSAVTLTVTREEHHFMVDARNRSYPLYSCWEAWPEKGMRRVYTTVLFSHIYLAPLALIVVMYARIARKLCQAPGPAPGGEEAADPRASRRRARVVHMLVMVALFFTLSWLPLWALLLLIDYGQLSAPQLHLVTVYAFPFAHWLAFFNSSANPIIYGYFNENFRRGFQAAFRARLCPRPSGSHKEAYSERPGGLLHRRVFVVVRPSDSGLPSESGPSSGAPRPGRLPLRNGRVAHHGLPREGPGCSHLPLTIPAWDI.

The segment at 1-20 is disordered; the sequence is MEGEPSQPPNSSWPLSQNGT. Residues 1–43 lie on the Extracellular side of the membrane; the sequence is MEGEPSQPPNSSWPLSQNGTNTEATPATNLTFSSYYQHTSPVA. Residues 9 to 20 are compositionally biased toward polar residues; the sequence is PNSSWPLSQNGT. Residues asparagine 10, asparagine 18, and asparagine 29 are each glycosylated (N-linked (GlcNAc...) asparagine). The helical transmembrane segment at 44–64 threads the bilayer; it reads AMFIVAYALIFLLCMVGNTLV. Topologically, residues 65 to 80 are cytoplasmic; the sequence is CFIVLKNRHMHTVTNM. Residues 81–101 traverse the membrane as a helical segment; the sequence is FILNLAVSDLLVGIFCMPTTL. The Extracellular segment spans residues 102–117; that stretch reads VDNLITGWPFDNATCK. N-linked (GlcNAc...) asparagine glycosylation is present at asparagine 113. A disulfide bond links cysteine 116 and cysteine 203. Residues 118–138 traverse the membrane as a helical segment; that stretch reads MSGLVQGMSVSASVFTLVAIA. Residues 139-158 are Cytoplasmic-facing; sequence VERFRCIVHPFREKLTLRKA. Residues 159-179 form a helical membrane-spanning segment; sequence LVTIAVIWALALLIMCPSAVT. Residues 180-214 lie on the Extracellular side of the membrane; sequence LTVTREEHHFMVDARNRSYPLYSCWEAWPEKGMRR. A glycan (N-linked (GlcNAc...) asparagine) is linked at asparagine 195. A helical membrane pass occupies residues 215–235; it reads VYTTVLFSHIYLAPLALIVVM. Residues 236-271 are Cytoplasmic-facing; it reads YARIARKLCQAPGPAPGGEEAADPRASRRRARVVHM. A helical membrane pass occupies residues 272–292; that stretch reads LVMVALFFTLSWLPLWALLLL. At 293–307 the chain is on the extracellular side; sequence IDYGQLSAPQLHLVT. A helical transmembrane segment spans residues 308 to 328; it reads VYAFPFAHWLAFFNSSANPII. Topologically, residues 329 to 430 are cytoplasmic; the sequence is YGYFNENFRR…LPLTIPAWDI (102 aa). Residues 379–404 show a composition bias toward low complexity; that stretch reads SDSGLPSESGPSSGAPRPGRLPLRNG. A disordered region spans residues 379-413; sequence SDSGLPSESGPSSGAPRPGRLPLRNGRVAHHGLPR.

The protein belongs to the G-protein coupled receptor 1 family.

It localises to the cell membrane. Functionally, receptor for NPAF (A-18-F-amide) and NPFF (F-8-F-amide) neuropeptides, also known as morphine-modulating peptides. Can also be activated by a variety of naturally occurring or synthetic FMRF-amide like ligands. This receptor mediates its action by association with G proteins that activate a phosphatidylinositol-calcium second messenger system. The polypeptide is Neuropeptide FF receptor 1 (Homo sapiens (Human)).